A 642-amino-acid chain; its full sequence is MIKVTFPDGNIKSYKKGITVLEVAEDISISLAKKIVAAKFNEDLVEISRKLEHDGKLQLLTPKEELSFHVLNHSAAHLMAQAIRKLYPDALFGVGPAIEEGYYYDVDFKDSVFTDADLEEVEKMMKKLSEENHLIERIEVSYDEARDIFKNDPYKLELIEVYKDDQLSVYRQGEFIDLCRGGHVPSTKYIKHFKLLSIAGAYWRGDAKNRQLVRVYGIAYFEKAELDKHLVMLEERKLRDHRKIGKDLDIFMTSQEVGSGLPFWLPKGATIRRIIERYITDKELELGYLHVYTPIMANVEFYKQSGHWDHYHENMYPPMDLGDGEMLVLRPMNCPHHMMIYKKDIHSYRELPIRFAELGMMHRYEKSGALSGLQRVREMTLNDAHIFVRPDQIKEEFMRVVHLIIEVYKDFKITDYSFRLSYRDPENKEKYFDDDQMWQRAESELKNVMDEMKLPYKEAIGEAAFYGPKLDIQVRTAMGMEETLSTVQLDFLLPERFDLTYVGEDGKNNHRPVVIHRGVVSTMERFVAYLIEEYKGSFPLWLAPVQLKLIPVNLDLHKDYVMNLHEQLKKLGFRVESDFRNEKLGYKIREAQTLKIPYQLVVGDNEMNTHSITYRPYGSEKQINISIDGFIKLLNERMINKD.

The TGS domain maps to 1–61 (MIKVTFPDGN…EHDGKLQLLT (61 aa)). A catalytic region spans residues 240–539 (DHRKIGKDLD…LIEEYKGSFP (300 aa)). Residues Cys334, His385, and His516 each coordinate Zn(2+).

The protein belongs to the class-II aminoacyl-tRNA synthetase family. In terms of assembly, homodimer. Zn(2+) is required as a cofactor.

It localises to the cytoplasm. It catalyses the reaction tRNA(Thr) + L-threonine + ATP = L-threonyl-tRNA(Thr) + AMP + diphosphate + H(+). Its function is as follows. Catalyzes the attachment of threonine to tRNA(Thr) in a two-step reaction: L-threonine is first activated by ATP to form Thr-AMP and then transferred to the acceptor end of tRNA(Thr). Also edits incorrectly charged L-seryl-tRNA(Thr). The protein is Threonine--tRNA ligase of Acholeplasma laidlawii (strain PG-8A).